Consider the following 201-residue polypeptide: Ciliary microtubule inner protein 2C (201 aa).

Belongs to the CIMIP2 family. In terms of assembly, microtubule inner protein component of sperm flagellar doublet microtubules.

Its subcellular location is the cytoplasm. The protein resides in the cytoskeleton. It localises to the cilium axoneme. It is found in the flagellum axoneme. Microtubule inner protein (MIP) part of the dynein-decorated doublet microtubules (DMTs) in cilia axoneme, which is required for motile cilia beating. Binds to the intra-tubulin interfaces. This Bos taurus (Bovine) protein is Ciliary microtubule inner protein 2C (CIMIP2C).